Consider the following 188-residue polypeptide: 3-deoxy-D-manno-octulosonate 8-phosphate phosphatase KdsC (188 aa).

The Mg(2+) site is built by aspartate 32 and aspartate 34. Residues aspartate 34, 55–59, arginine 63, arginine 78, arginine 86, and lysine 102 each bind substrate; that span reads NVRDG. A Mg(2+)-binding site is contributed by aspartate 125.

It belongs to the KdsC family. Homotetramer. The cofactor is Mg(2+).

The enzyme catalyses 3-deoxy-alpha-D-manno-2-octulosonate-8-phosphate + H2O = 3-deoxy-alpha-D-manno-oct-2-ulosonate + phosphate. It participates in carbohydrate biosynthesis; 3-deoxy-D-manno-octulosonate biosynthesis; 3-deoxy-D-manno-octulosonate from D-ribulose 5-phosphate: step 3/3. Its pathway is bacterial outer membrane biogenesis; lipopolysaccharide biosynthesis. Functionally, catalyzes the hydrolysis of 3-deoxy-D-manno-octulosonate 8-phosphate (KDO 8-P) to 3-deoxy-D-manno-octulosonate (KDO) and inorganic phosphate. The protein is 3-deoxy-D-manno-octulosonate 8-phosphate phosphatase KdsC of Escherichia coli (strain K12).